The sequence spans 428 residues: Sialidase-3 (428 aa).

The short motif at Tyr-24–Pro-27 is the FRIP motif element. Residues Arg-25 and Arg-45 each coordinate substrate. The Proton acceptor role is filled by Asp-50. Residues Ile-129–Glu-140 form a BNR 1 repeat. Residues Tyr-179 and Tyr-181 each coordinate substrate. The stretch at Ile-203–His-214 is one BNR 2 repeat. Positions 225 and 245 each coordinate substrate. One copy of the BNR 3 repeat lies at Ala-254–Arg-265. A disordered region spans residues Arg-294–Glu-318. The span at Lys-301–Ser-313 shows a compositional bias: polar residues. Ser-313 bears the Phosphoserine mark. Arg-340 contributes to the substrate binding site. Catalysis depends on Tyr-370, which acts as the Nucleophile. Glu-387 is a catalytic residue.

This sequence belongs to the glycosyl hydrolase 33 family. Interacts with CAV1; this interaction enhances NEU3 sialidase activity within caveola. Interacts with EGFR; this interaction mediates desialylation of EGFR and enhances downstream signaling. Palmitoylated; may regulate intracellular trafficking and anchorage to plasma membrane and endomembranes. Highly expressed in skeletal muscle, testis, adrenal gland and thymus, followed by pancreas, liver, heart and thymus. Weakly expressed in kidney, placenta, brain and lung.

It localises to the cell membrane. The protein resides in the membrane. The protein localises to the caveola. Its subcellular location is the early endosome membrane. It is found in the recycling endosome membrane. It localises to the lysosome membrane. The catalysed reaction is Hydrolysis of alpha-(2-&gt;3)-, alpha-(2-&gt;6)-, alpha-(2-&gt;8)- glycosidic linkages of terminal sialic acid residues in oligosaccharides, glycoproteins, glycolipids, colominic acid and synthetic substrates.. It carries out the reaction a ganglioside GD1a + H2O = a ganglioside GM1 + N-acetylneuraminate. The enzyme catalyses a ganglioside GD1a (d18:1(4E)) + H2O = a ganglioside GM1 (d18:1(4E)) + N-acetylneuraminate. It catalyses the reaction a ganglioside GD1b + H2O = a ganglioside GM1 + N-acetylneuraminate. The catalysed reaction is a ganglioside GD1b (d18:1(4E)) + H2O = a ganglioside GM1 (d18:1(4E)) + N-acetylneuraminate. It carries out the reaction a ganglioside GD3 + H2O = a ganglioside GM3 + N-acetylneuraminate. The enzyme catalyses a ganglioside GD3 (d18:1(4E)) + H2O = a ganglioside GM3 (d18:1(4E)) + N-acetylneuraminate. It catalyses the reaction a ganglioside GM3 + H2O = a beta-D-galactosyl-(1-&gt;4)-beta-D-glucosyl-(1&lt;-&gt;1)-ceramide + N-acetylneuraminate. The catalysed reaction is a ganglioside GM1 + H2O = a ganglioside GA1 + N-acetylneuraminate. It carries out the reaction a ganglioside GM1 (d18:1(4E)) + H2O = a ganglioside GA1 (d18:1(4E)) + N-acetylneuraminate. The enzyme catalyses a ganglioside GM2 (d18:1(4E)) + H2O = a ganglioside GA2 (d18:1(4E)) + N-acetylneuraminate. It catalyses the reaction a ganglioside GM3 (d18:1(4E)) + H2O = a beta-D-Gal-(1-&gt;4)-beta-D-Glc-(1&lt;-&gt;1)-Cer(d18:1(4E)) + N-acetylneuraminate. The catalysed reaction is a ganglioside GT1b + H2O = a ganglioside GD1b + N-acetylneuraminate. Its function is as follows. Exo-alpha-sialidase that catalyzes the hydrolytic cleavage of the terminal sialic acid (N-acetylneuraminic acid, Neu5Ac) of a glycan moiety in the catabolism of glycolipids, glycoproteins and oligosacharides. Displays high catalytic efficiency for gangliosides including alpha-(2-&gt;3)-sialylated GD1a and GM3 and alpha-(2-&gt;8)-sialylated GD3. Plays a role in the regulation of transmembrane signaling through the modulation of ganglioside content of the lipid bilayer and by direct interaction with signaling receptors, such as EGFR. Desialylates EGFR and activates downstream signaling in proliferating cells. Contributes to clathrin-mediated endocytosis by regulating sorting of endocytosed receptors to early and recycling endosomes. The polypeptide is Sialidase-3 (NEU3) (Homo sapiens (Human)).